The chain runs to 122 residues: Double-headed protease inhibitor, submandibular gland (122 aa).

Kazal-like domains are found at residues 10-70 and 71-121; these read GGRK…KCDI and ECPQ…QCQS. Cystine bridges form between Cys16-Cys50, Cys28-Cys47, Cys36-Cys68, Cys72-Cys101, Cys79-Cys98, and Cys87-Cys119.

It localises to the secreted. This inhibitor is composed of two homologous actively inhibiting halves: one which inhibits trypsin, the other which inhibits elastase. This is Double-headed protease inhibitor, submandibular gland from Mustela lutreola (European mink).